We begin with the raw amino-acid sequence, 456 residues long: Bifunctional protein GlmU (456 aa).

Residues 1 to 229 form a pyrophosphorylase region; sequence MLNNAMSVVI…LSEVEGVNNR (229 aa). UDP-N-acetyl-alpha-D-glucosamine-binding positions include 11-14, K25, Q76, 81-82, 103-105, G140, E154, N169, and N227; these read LAAG, GT, and YGD. Residue D105 coordinates Mg(2+). Residue N227 participates in Mg(2+) binding. The interval 230-250 is linker; sequence LQLSRLERVYQSEQAEKLLLA. An N-acetyltransferase region spans residues 251–456; it reads GVMLRDPARF…EGWRRPVKKK (206 aa). The UDP-N-acetyl-alpha-D-glucosamine site is built by R333 and K351. Catalysis depends on H363, which acts as the Proton acceptor. Residues Y366 and N377 each contribute to the UDP-N-acetyl-alpha-D-glucosamine site. Acetyl-CoA is bound by residues A380, 386 to 387, S405, A423, and R440; that span reads NY.

This sequence in the N-terminal section; belongs to the N-acetylglucosamine-1-phosphate uridyltransferase family. In the C-terminal section; belongs to the transferase hexapeptide repeat family. Homotrimer. Mg(2+) is required as a cofactor.

It is found in the cytoplasm. It carries out the reaction alpha-D-glucosamine 1-phosphate + acetyl-CoA = N-acetyl-alpha-D-glucosamine 1-phosphate + CoA + H(+). It catalyses the reaction N-acetyl-alpha-D-glucosamine 1-phosphate + UTP + H(+) = UDP-N-acetyl-alpha-D-glucosamine + diphosphate. It participates in nucleotide-sugar biosynthesis; UDP-N-acetyl-alpha-D-glucosamine biosynthesis; N-acetyl-alpha-D-glucosamine 1-phosphate from alpha-D-glucosamine 6-phosphate (route II): step 2/2. Its pathway is nucleotide-sugar biosynthesis; UDP-N-acetyl-alpha-D-glucosamine biosynthesis; UDP-N-acetyl-alpha-D-glucosamine from N-acetyl-alpha-D-glucosamine 1-phosphate: step 1/1. It functions in the pathway bacterial outer membrane biogenesis; LPS lipid A biosynthesis. Catalyzes the last two sequential reactions in the de novo biosynthetic pathway for UDP-N-acetylglucosamine (UDP-GlcNAc). The C-terminal domain catalyzes the transfer of acetyl group from acetyl coenzyme A to glucosamine-1-phosphate (GlcN-1-P) to produce N-acetylglucosamine-1-phosphate (GlcNAc-1-P), which is converted into UDP-GlcNAc by the transfer of uridine 5-monophosphate (from uridine 5-triphosphate), a reaction catalyzed by the N-terminal domain. The sequence is that of Bifunctional protein GlmU from Shigella flexneri serotype 5b (strain 8401).